The following is a 345-amino-acid chain: uncharacterized protein (345 aa).

It belongs to the cycloisomerase 2 family.

This is an uncharacterized protein from Staphylococcus saprophyticus subsp. saprophyticus (strain ATCC 15305 / DSM 20229 / NCIMB 8711 / NCTC 7292 / S-41).